We begin with the raw amino-acid sequence, 566 residues long: Urease subunit alpha (566 aa).

Residues G129–F566 enclose the Urease domain. Ni(2+)-binding residues include H134, H136, and K217. At K217 the chain carries N6-carboxylysine. H219 provides a ligand contact to substrate. Ni(2+) contacts are provided by H246 and H272. Catalysis depends on H320, which acts as the Proton donor. Residue D360 participates in Ni(2+) binding.

It belongs to the metallo-dependent hydrolases superfamily. Urease alpha subunit family. As to quaternary structure, heterotrimer of UreA (gamma), UreB (beta) and UreC (alpha) subunits. Three heterotrimers associate to form the active enzyme. Requires Ni cation as cofactor. In terms of processing, carboxylation allows a single lysine to coordinate two nickel ions.

The protein resides in the cytoplasm. It catalyses the reaction urea + 2 H2O + H(+) = hydrogencarbonate + 2 NH4(+). The protein operates within nitrogen metabolism; urea degradation; CO(2) and NH(3) from urea (urease route): step 1/1. In Janthinobacterium sp. (strain Marseille) (Minibacterium massiliensis), this protein is Urease subunit alpha.